A 507-amino-acid polypeptide reads, in one-letter code: Fluoroacetaldehyde dehydrogenase (507 aa).

219-225 (GFGIEAG) provides a ligand contact to NAD(+). Residues Glu263 and Cys302 contribute to the active site.

The protein belongs to the aldehyde dehydrogenase family. As to quaternary structure, homotetramer.

The enzyme catalyses fluoroacetaldehyde + NAD(+) + H2O = fluoroacetate + NADH + 2 H(+). Functionally, catalyzes the oxidation of fluoroacetaldehyde to fluoroacetate. Has high affinity for fluoroacetate and glycolaldehyde but not for acetaldehyde. This Streptantibioticus cattleyicolor (strain ATCC 35852 / DSM 46488 / JCM 4925 / NBRC 14057 / NRRL 8057) (Streptomyces cattleya) protein is Fluoroacetaldehyde dehydrogenase.